Here is a 110-residue protein sequence, read N- to C-terminus: Large ribosomal subunit protein eL30 (110 aa).

The protein belongs to the eukaryotic ribosomal protein eL30 family.

The chain is Large ribosomal subunit protein eL30 (rpl30e) from Methanocaldococcus jannaschii (strain ATCC 43067 / DSM 2661 / JAL-1 / JCM 10045 / NBRC 100440) (Methanococcus jannaschii).